Consider the following 722-residue polypeptide: Mesentericin-Y105 transport/processing ATP-binding protein MesD (722 aa).

The 128-residue stretch at 16–143 (QVDERDCGVA…EEWTGVSIFI (128 aa)) folds into the Peptidase C39 domain. Cys-22 is an active-site residue. 8 helical membrane passes run 171–191 (LLVINIVIAALLVTLVSILGS), 210–230 (LGIVSLGLIFAYVIQQLLSYA), 242–262 (LSIDIILSYIKHIFELPMSFF), 287–307 (TMLSVFLDLGILVIVGTVLVV), 311–331 (TLFLISLIAIPAYALVVWLFM), 401–421 (SLLQLSLNVVILWVGAQLVMT), 429–449 (LITYNALLGFFTDPLQNIINL), and 518–538 (IALVGISGSGKSTLVKLLVNF). Positions 173 to 455 (VINIVIAALL…IINLQTKLQQ (283 aa)) constitute an ABC transmembrane type-1 domain. In terms of domain architecture, ABC transporter spans 489-722 (LVADHITYKY…GGFYASLFNH (234 aa)). 522-529 (GISGSGKS) contacts ATP.

This sequence belongs to the ABC transporter superfamily.

The protein resides in the cell membrane. Involved in the export process of the bacteriocin mesentericin-Y105. The chain is Mesentericin-Y105 transport/processing ATP-binding protein MesD (mesD) from Leuconostoc mesenteroides.